The sequence spans 622 residues: Chaperone protein HscA homolog (622 aa).

Belongs to the heat shock protein 70 family.

Functionally, chaperone involved in the maturation of iron-sulfur cluster-containing proteins. Has a low intrinsic ATPase activity which is markedly stimulated by HscB. This chain is Chaperone protein HscA homolog, found in Burkholderia pseudomallei (strain 668).